The following is a 323-amino-acid chain: Glucokinase (323 aa).

8–13 (GDVGGT) contacts ATP.

It belongs to the bacterial glucokinase family.

Its subcellular location is the cytoplasm. It carries out the reaction D-glucose + ATP = D-glucose 6-phosphate + ADP + H(+). The polypeptide is Glucokinase (Yersinia enterocolitica serotype O:8 / biotype 1B (strain NCTC 13174 / 8081)).